A 486-amino-acid chain; its full sequence is Pentatricopeptide repeat-containing protein At3g06430, chloroplastic (486 aa).

The N-terminal 36 residues, 1–36, are a transit peptide targeting the chloroplast; the sequence is MASMSLSFSSSLCSSRIPEGKRRFRHRDVGIVRCVL. 10 PPR repeats span residues 123–157, 158–188, 194–228, 229–264, 265–299, 300–334, 335–369, 370–404, 405–439, and 440–470; these read KEGT…GLEP, TVEL…MKSF, DVFT…LITP, NTVT…ACKP, DVWT…GIEP, ETRT…EFPW, TTST…GMKA, DTKT…EIPE, NTAF…QCVC, and DSRT…RQKL.

The protein belongs to the PPR family. P subfamily.

Its subcellular location is the plastid. The protein resides in the chloroplast. In Arabidopsis thaliana (Mouse-ear cress), this protein is Pentatricopeptide repeat-containing protein At3g06430, chloroplastic (EMB2750).